Here is a 175-residue protein sequence, read N- to C-terminus: UPF0398 protein SPH_0478 (175 aa).

Belongs to the UPF0398 family.

This chain is UPF0398 protein SPH_0478, found in Streptococcus pneumoniae (strain Hungary19A-6).